Here is an 837-residue protein sequence, read N- to C-terminus: Tuftelin-interacting protein 11 (837 aa).

2 stretches are compositionally biased toward basic and acidic residues: residues 1–13 (MSLS…GEGR) and 53–64 (VWAERDSDDERP). Disordered regions lie at residues 1–21 (MSLS…DDER), 53–72 (VWAE…KRAR), and 85–133 (LKKG…KGFA). Positions 1-50 (MSLSHLYRDGEGRIDDDDDERENFEITDWDLQNEFNPNRQRHWQTKEEAT) are required for interaction with DHX15. Residues Ser2, Ser59, and Ser98 each carry the phosphoserine modification. A compositionally biased stretch (acidic residues) spans 91-102 (EEAELEDSDDEE). Positions 103–116 (KPVKQDDFPKDFGP) are enriched in basic and acidic residues. Ser144 is subject to Phosphoserine. The G-patch domain maps to 149-195 (TKGIGQKLLQKMGYVPGRGLGKNAQGIINPIEAKQRKGKGAVGAYGS). The segment at 179–236 (IEAKQRKGKGAVGAYGSERTTQSMQDFPVVDSEEEAEEEFQKELSQWRKDPSGSKKKP) is disordered. Ser210 carries the post-translational modification Phosphoserine. A compositionally biased stretch (basic and acidic residues) spans 217–231 (EFQKELSQWRKDPSG). The Nuclear localization signal signature appears at 700–705 (VKDKFN). Residues 710–734 (IMNRAVSSNVGAYMQPGARENIAYL) form a required for nuclear speckle localization region.

This sequence belongs to the TFP11/STIP family. Identified in the spliceosome C complex. Found in the Intron Large (IL) complex, a post-mRNA release spliceosomal complex containing the excised intron, U2, U5 and U6 snRNPs, and splicing factors. Interacts with TUFT1. Interacts with DHX15; indicative for a recruitment of DHX15 to the IL complex. Interacts with GCFC2.

The protein localises to the cytoplasm. The protein resides in the nucleus. In terms of biological role, involved in pre-mRNA splicing, specifically in spliceosome disassembly during late-stage splicing events. Intron turnover seems to proceed through reactions in two lariat-intron associated complexes termed Intron Large (IL) and Intron Small (IS). In cooperation with DHX15 seems to mediate the transition of the U2, U5 and U6 snRNP-containing IL complex to the snRNP-free IS complex leading to efficient debranching and turnover of excised introns. May play a role in the differentiation of ameloblasts and odontoblasts or in the forming of the enamel extracellular matrix. The sequence is that of Tuftelin-interacting protein 11 (TFIP11) from Homo sapiens (Human).